The sequence spans 372 residues: Ciliary neurotrophic factor receptor subunit alpha (372 aa).

The first 22 residues, 1–22 (MAAPVPWACCAVLAAAAAVVYA), serve as a signal peptide directing secretion. The 78-residue stretch at 27-104 (PQEAPHVQYE…WHLRHQVLLH (78 aa)) folds into the Ig-like C2-type domain. A disulfide bridge connects residues cysteine 46 and cysteine 89. Residues asparagine 60, asparagine 70, asparagine 142, and asparagine 190 are each glycosylated (N-linked (GlcNAc...) asparagine). Fibronectin type-III domains are found at residues 108–205 (PPRE…VKPD) and 206–306 (PPEN…TEEP). The WSXWS motif signature appears at 290 to 294 (WSDWS). Residues 301–340 (PWTEEPRHLTTEAQAAETTTSTTSSLAPPPTTKICDPGEL) form a disordered region. Residues 311-326 (TEAQAAETTTSTTSSL) show a composition bias toward low complexity. Serine 342 carries the GPI-anchor amidated serine lipid modification. Residues 343–372 (GGGPSAPFLVSVPITLALAAAAATASSLLI) constitute a propeptide, removed in mature form.

Belongs to the type I cytokine receptor family. Type 3 subfamily. As to quaternary structure, forms a heterotrimer with LIFR and IL6ST. Interacts with heterodimeric neurotropic cytokine composed of CLCF1/CLC and CRLF1/CLF-1. Either alone or in complex with the heterodimer CLCF1-CRLF1 interacts with SORL1; this interaction may promote internalization and lysosomal degradation. Component of a receptor complex composed of IL6ST/GP130, IL27RA/WSX1 and CNTFR which interacts with the neuroprotective peptide humanin. Nervous system and skeletal muscle.

It is found in the cell membrane. Its function is as follows. Binds to CNTF. The alpha subunit provides the receptor specificity. Receptor for heterodimeric neurotropic cytokine composed of CLCF1/CLC and CRLF1/CLF-1. Acts as a receptor for the neuroprotective peptide humanin as part of a complex with IL6ST/GP130 and IL27RA/WSX1. This chain is Ciliary neurotrophic factor receptor subunit alpha (CNTFR), found in Homo sapiens (Human).